We begin with the raw amino-acid sequence, 121 residues long: Small ribosomal subunit protein uS13 (121 aa).

The tract at residues 90–121 (RHRRGLPTRGQNTKNNARTRKGPTKTVAGKKK) is disordered. Basic residues predominate over residues 106–121 (ARTRKGPTKTVAGKKK).

This sequence belongs to the universal ribosomal protein uS13 family. As to quaternary structure, part of the 30S ribosomal subunit. Forms a loose heterodimer with protein S19. Forms two bridges to the 50S subunit in the 70S ribosome.

Its function is as follows. Located at the top of the head of the 30S subunit, it contacts several helices of the 16S rRNA. In the 70S ribosome it contacts the 23S rRNA (bridge B1a) and protein L5 of the 50S subunit (bridge B1b), connecting the 2 subunits; these bridges are implicated in subunit movement. Contacts the tRNAs in the A and P-sites. The chain is Small ribosomal subunit protein uS13 from Enterococcus faecalis (strain ATCC 700802 / V583).